The following is a 334-amino-acid chain: Glyceraldehyde-3-phosphate dehydrogenase (334 aa).

Residues 12 to 13, Asp37, Arg81, and Ser123 each bind NAD(+); that span reads RI. D-glyceraldehyde 3-phosphate contacts are provided by residues 153 to 155 and Thr184; that span reads SCT. Catalysis depends on Cys154, which acts as the Nucleophile. Asn185 provides a ligand contact to NAD(+). D-glyceraldehyde 3-phosphate-binding positions include Arg199, 212–213, and Arg235; that span reads TG. Asn314 contributes to the NAD(+) binding site.

Belongs to the glyceraldehyde-3-phosphate dehydrogenase family. In terms of assembly, homotetramer.

The protein resides in the cytoplasm. The enzyme catalyses D-glyceraldehyde 3-phosphate + phosphate + NAD(+) = (2R)-3-phospho-glyceroyl phosphate + NADH + H(+). The protein operates within carbohydrate degradation; glycolysis; pyruvate from D-glyceraldehyde 3-phosphate: step 1/5. In terms of biological role, catalyzes the oxidative phosphorylation of glyceraldehyde 3-phosphate (G3P) to 1,3-bisphosphoglycerate (BPG) using the cofactor NAD. The first reaction step involves the formation of a hemiacetal intermediate between G3P and a cysteine residue, and this hemiacetal intermediate is then oxidized to a thioester, with concomitant reduction of NAD to NADH. The reduced NADH is then exchanged with the second NAD, and the thioester is attacked by a nucleophilic inorganic phosphate to produce BPG. This chain is Glyceraldehyde-3-phosphate dehydrogenase (gap), found in Pseudomonas aeruginosa (strain ATCC 15692 / DSM 22644 / CIP 104116 / JCM 14847 / LMG 12228 / 1C / PRS 101 / PAO1).